Consider the following 179-residue polypeptide: Endoribonuclease YbeY (179 aa).

His-148, His-152, and His-158 together coordinate Zn(2+).

This sequence belongs to the endoribonuclease YbeY family. Requires Zn(2+) as cofactor.

It is found in the cytoplasm. Single strand-specific metallo-endoribonuclease involved in late-stage 70S ribosome quality control and in maturation of the 3' terminus of the 16S rRNA. The polypeptide is Endoribonuclease YbeY (Prochlorococcus marinus (strain AS9601)).